The primary structure comprises 240 residues: Lactate utilization protein C (240 aa).

It belongs to the LutC/YkgG family.

Its function is as follows. Is involved in L-lactate degradation and allows cells to grow with lactate as the sole carbon source. In Bacillus licheniformis (strain ATCC 14580 / DSM 13 / JCM 2505 / CCUG 7422 / NBRC 12200 / NCIMB 9375 / NCTC 10341 / NRRL NRS-1264 / Gibson 46), this protein is Lactate utilization protein C.